We begin with the raw amino-acid sequence, 2324 residues long: Myomegalin (2324 aa).

Coiled coils occupy residues 41 to 132 (REDV…LVEA), 158 to 205 (QVKL…LLEE), 238 to 288 (DSHL…SLKE), and 348 to 638 (LFCS…NKQA). Disordered stretches follow at residues 72 to 96 (TWAD…EPQQ) and 205 to 240 (EPGG…SDSH). The span at 85–96 (AELRRQVEEPQQ) shows a compositional bias: basic and acidic residues. The span at 219 to 238 (PTQQKPDLNETPTTQPSVSD) shows a compositional bias: polar residues. The disordered stretch occupies residues 701–747 (PAGATSVGPHHGEQTDQGSTQMPSRDDSTSLTAREEASIPRSTLGDS). Residue Thr-705 is modified to Phosphothreonine. Residues 724-738 (SRDDSTSLTAREEAS) are compositionally biased toward basic and acidic residues. 3 coiled-coil regions span residues 745–822 (GDSD…QLVD), 855–923 (ENRR…EEVL), and 1011–1043 (LRAE…GFSS). 2 disordered regions span residues 1155 to 1182 (LPSS…SLKL) and 1195 to 1216 (NKSQ…STKH). Coiled coils occupy residues 1213 to 1241 (STKH…SEAT), 1346 to 1384 (TSDD…LSAT), and 1430 to 1455 (GLQA…PKTG). 6 disordered regions span residues 1540–1559 (TDRL…KEEA), 1589–1610 (RFSS…SSTS), 1628–1685 (YTHY…IPKP), 1742–1773 (APPT…SPAR), 1857–1877 (LSST…GLES), and 2081–2140 (NQQP…TPPK). The Olduvai domain maps to 1550 to 1641 (KDHKSEKEEA…EEKKPSPSNS (92 aa)). 2 stretches are compositionally biased toward low complexity: residues 1591–1610 (SSPP…SSTS) and 1637–1646 (SPSNSAASAS). Over residues 1743 to 1767 (PPTSTSTLLSNHTEASSPRYSNPAQ) the composition is skewed to polar residues. The stretch at 1821-2056 (GADLLEEHLG…LRLQLEQQMD (236 aa)) forms a coiled coil. Polar residues-rich tracts occupy residues 2081–2090 (NQQPPFQGSA) and 2108–2135 (PSNS…SAAT). A coiled-coil region spans residues 2248–2274 (EEGNLMEKELLDLRAQVSQQQQLLQST).

Interacts with PDE4D. May interact with MAPRE1 and MAPRE3. May form a pericentrosomal complex with AKAP9, CDK5RAP2 and EB1/MAPRE1 in an isoform-specific manner; within this complex, may mediate MAPRE1-binding to CDK5RAP2. Interaction with AKAP9 stabilizes both proteins. May interact with CAMSAP2 in an isoform-specific manner; this interaction is much stronger in the presence of AKAP9. In complex with AKAP9, recruits CAMSAP2 to the Golgi apparatus. May interact with unglycosylated LGALS3BP in an isoform-specific manner; this interaction may connect the pericentrosomal complex to the gamma-tubulin ring complex (gamma-TuRC) to promote microtubule assembly and acetylation. Abundantly expressed in heart and skeletal muscle and to a lower extent in brain, lung and liver. Expressed in heart, skeletal muscle and testis (at protein level).

The protein resides in the cytoplasm. It localises to the cytoskeleton. Its subcellular location is the microtubule organizing center. The protein localises to the centrosome. It is found in the golgi apparatus. Functionally, functions as an anchor sequestering components of the cAMP-dependent pathway to Golgi and/or centrosomes. May participate in microtubule dynamics, promoting microtubule assembly, in an isoform-specific manner. Depending upon the cell context, may act at the level of the Golgi apparatus or that of the centrosome. In complex with AKAP9, recruits CAMSAP2 to the Golgi apparatus and tethers non-centrosomal minus-end microtubules to the Golgi, an important step for polarized cell movement. In complex with AKAP9, EB1/MAPRE1 and CDK5RAP2, contributes to microtubules nucleation and extension from the centrosome to the cell periphery, a crucial process for directed cell migration, mitotic spindle orientation and cell-cycle progression. The sequence is that of Myomegalin (Pde4dip) from Rattus norvegicus (Rat).